Consider the following 122-residue polypeptide: Large ribosomal subunit protein uL18 (122 aa).

This sequence belongs to the universal ribosomal protein uL18 family. As to quaternary structure, part of the 50S ribosomal subunit; part of the 5S rRNA/L5/L18/L25 subcomplex. Contacts the 5S and 23S rRNAs.

Functionally, this is one of the proteins that bind and probably mediate the attachment of the 5S RNA into the large ribosomal subunit, where it forms part of the central protuberance. The polypeptide is Large ribosomal subunit protein uL18 (Thermosipho melanesiensis (strain DSM 12029 / CIP 104789 / BI429)).